The following is a 156-amino-acid chain: ATP synthase subunit b (156 aa).

A helical transmembrane segment spans residues 5–25; that stretch reads LTLIGQAIAFAFFVAFCMKFV.

The protein belongs to the ATPase B chain family. As to quaternary structure, F-type ATPases have 2 components, F(1) - the catalytic core - and F(0) - the membrane proton channel. F(1) has five subunits: alpha(3), beta(3), gamma(1), delta(1), epsilon(1). F(0) has three main subunits: a(1), b(2) and c(10-14). The alpha and beta chains form an alternating ring which encloses part of the gamma chain. F(1) is attached to F(0) by a central stalk formed by the gamma and epsilon chains, while a peripheral stalk is formed by the delta and b chains.

The protein resides in the cell inner membrane. In terms of biological role, f(1)F(0) ATP synthase produces ATP from ADP in the presence of a proton or sodium gradient. F-type ATPases consist of two structural domains, F(1) containing the extramembraneous catalytic core and F(0) containing the membrane proton channel, linked together by a central stalk and a peripheral stalk. During catalysis, ATP synthesis in the catalytic domain of F(1) is coupled via a rotary mechanism of the central stalk subunits to proton translocation. Its function is as follows. Component of the F(0) channel, it forms part of the peripheral stalk, linking F(1) to F(0). The protein is ATP synthase subunit b of Acinetobacter baumannii (strain AYE).